Here is a 658-residue protein sequence, read N- to C-terminus: MDRGTLPLAVALLLASCSLSPTSLAETVHCDLQPVGPERGEVTYTTSQVSKGCVAQAPNAILEVHVLFLEFPTGPSQLELTLQASKQNGTWPREVLLVLSVNSSVFLHLQALGIPLHLAYNSSLVTFQEPPGVNTTELPSFPKTQILEWAAERGPITSAAELNDPQSILLRLGQAQGSLSFCMLEASQDMGRTLEWRPRTPALVRGCHLEGVAGHKEAHILRVLPGHSAGPRTVTVKVELSCAPGDLDAVLILQGPPYVSWLIDANHNMQIWTTGEYSFKIFPEKNIRGFKLPDTPQGLLGEARMLNASIVASFVELPLASIVSLHASSCGGRLQTSPAPIQTTPPKDTCSPELLMSLIQTKCADDAMTLVLKKELVAHLKCTITGLTFWDPSCEAEDRGDKFVLRSAYSSCGMQVSASMISNEAVVNILSSSSPQRKKVHCLNMDSLSFQLGLYLSPHFLQASNTIEPGQQSFVQVRVSPSVSEFLLQLDSCHLDLGPEGGTVELIQGRAAKGNCVSLLSPSPEGDPRFSFLLHFYTVPIPKTGTLSCTVALRPKTGSQDQEVHRTVFMRLNIISPDLSGCTSKGLVLPAVLGITFGAFLIGALLTAALWYIYSHTRSPSKREPVVAVAAPASSESSSTNHSIGSTQSTPCSTSSMA.

An N-terminal signal peptide occupies residues 1-25 (MDRGTLPLAVALLLASCSLSPTSLA). Positions 26 to 46 (ETVHCDLQPVGPERGEVTYTT) are OR1, N-terminal part. The interval 26–337 (ETVHCDLQPV…SSCGGRLQTS (312 aa)) is required for interaction with GDF2. The Extracellular segment spans residues 26-586 (ETVHCDLQPV…PDLSGCTSKG (561 aa)). 7 disulfide bridges follow: Cys30–Cys207, Cys53–Cys182, Cys242–Cys330, Cys350–Cys382, Cys363–Cys442, Cys394–Cys412, and Cys493–Cys549. The tract at residues 47–199 (SQVSKGCVAQ…MGRTLEWRPR (153 aa)) is OR2. Asn88, Asn102, Asn121, and Asn134 each carry an N-linked (GlcNAc...) asparagine glycan. The OR1, C-terminal part stretch occupies residues 200-330 (TPALVRGCHL…SIVSLHASSC (131 aa)). The essential for interaction with GDF2 stretch occupies residues 270-282 (QIWTTGEYSFKIF). Asn307 carries an N-linked (GlcNAc...) asparagine glycan. The region spanning 363 to 533 (CADDAMTLVL…PEGDPRFSFL (171 aa)) is the ZP domain. Residues 399–401 (RGD) carry the Cell attachment site motif. A helical membrane pass occupies residues 587 to 611 (LVLPAVLGITFGAFLIGALLTAALW). The Cytoplasmic portion of the chain corresponds to 612-658 (YIYSHTRSPSKREPVVAVAAPASSESSSTNHSIGSTQSTPCSTSSMA). Residues 626–639 (VVAVAAPASSESSS) show a composition bias toward low complexity. Residues 626–658 (VVAVAAPASSESSSTNHSIGSTQSTPCSTSSMA) form a disordered region. Positions 640-658 (TNHSIGSTQSTPCSTSSMA) are enriched in polar residues. A phosphoserine; by TGFBR1 mark is found at Ser646 and Ser649.

In terms of assembly, homodimer; disulfide-linked. Forms a heteromeric complex with the signaling receptors for transforming growth factor-beta: TGFBR1 and/or TGFBR2. It is able to bind TGFB1 and TGFB2 with high affinity, but not TGFB3. Interacts with GDF2, forming a heterotetramer with a 2:2 stoichiometry. Interacts with ACVRL1. Can form a heteromeric complex with GDF2 and ACVRL1. Interacts with BMP10. Interacts with DYNLT4. Interacts with ARRB2. In terms of tissue distribution, detected on umbilical veil endothelial cells. Detected in placenta (at protein level). Detected on endothelial cells.

The protein localises to the cell membrane. In terms of biological role, vascular endothelium glycoprotein that plays an important role in the regulation of angiogenesis. Required for normal structure and integrity of adult vasculature. Regulates the migration of vascular endothelial cells. Required for normal extraembryonic angiogenesis and for embryonic heart development. May regulate endothelial cell shape changes in response to blood flow, which drive vascular remodeling and establishment of normal vascular morphology during angiogenesis. May play a critical role in the binding of endothelial cells to integrins and/or other RGD receptors. Acts as a TGF-beta coreceptor and is involved in the TGF-beta/BMP signaling cascade that ultimately leads to the activation of SMAD transcription factors. Required for GDF2/BMP9 signaling through SMAD1 in endothelial cells and modulates TGFB1 signaling through SMAD3. This Homo sapiens (Human) protein is Endoglin (ENG).